We begin with the raw amino-acid sequence, 504 residues long: D-alanine--D-alanyl carrier protein ligase (504 aa).

Thr152 to Ser153 is an ATP binding site. Asp197 provides a ligand contact to D-alanine. Asn292–Thr297 provides a ligand contact to ATP. Val301 serves as a coordination point for D-alanine. ATP is bound by residues Asp383, Tyr394 to Arg397, and Lys492. Lys492 serves as a coordination point for D-alanine.

It belongs to the ATP-dependent AMP-binding enzyme family. DltA subfamily.

The protein resides in the cytoplasm. The catalysed reaction is holo-[D-alanyl-carrier protein] + D-alanine + ATP = D-alanyl-[D-alanyl-carrier protein] + AMP + diphosphate. The protein operates within cell wall biogenesis; lipoteichoic acid biosynthesis. Catalyzes the first step in the D-alanylation of lipoteichoic acid (LTA), the activation of D-alanine and its transfer onto the D-alanyl carrier protein (Dcp) DltC. In an ATP-dependent two-step reaction, forms a high energy D-alanyl-AMP intermediate, followed by transfer of the D-alanyl residue as a thiol ester to the phosphopantheinyl prosthetic group of the Dcp. D-alanylation of LTA plays an important role in modulating the properties of the cell wall in Gram-positive bacteria, influencing the net charge of the cell wall. The polypeptide is D-alanine--D-alanyl carrier protein ligase (Bacillus cereus (strain ZK / E33L)).